A 419-amino-acid chain; its full sequence is G protein-activated inward rectifier potassium channel 4 (419 aa).

Positions 1-24 (MAGDSRNAMNQDMEIGVTPRDPKK) are disordered. Residues 1-86 (MAGDSRNAMN…LFTTLVDLKW (86 aa)) lie on the Cytoplasmic side of the membrane. The residue at position 5 (Ser-5) is a Phosphoserine. A helical transmembrane segment spans residues 87-111 (RFNLLVFTMVYTITWLFFGFIWWLI). The Extracellular portion of the chain corresponds to 112-135 (AYIRGDLDHVGDREWIPCVENLSG). Residues 136–147 (FVSAFLFSIETE) constitute an intramembrane region (helical; Pore-forming). An intramembrane region (pore-forming) is located at residues 148-154 (TTIGYGF). The Selectivity filter motif lies at 149–154 (TIGYGF). Over 155-163 (RVITEKCPE) the chain is Extracellular. Residues 164 to 185 (GIVLLLVQAILGSIVNAFMVGC) form a helical membrane-spanning segment. Residues 186–419 (MFVKISQPKK…SGSQETKDSA (234 aa)) are Cytoplasmic-facing. The segment at 381 to 419 (PSPPLPGGCVGAELGAEAEQEGEEEPEGLSGSQETKDSA) is disordered. Positions 396-407 (AEAEQEGEEEPE) are enriched in acidic residues.

The protein belongs to the inward rectifier-type potassium channel (TC 1.A.2.1) family. KCNJ5 subfamily. As to quaternary structure, associates with KCNJ3/GIRK1 or KCNJ6/GIRK2 to form a G-protein-activated heteromultimer pore-forming unit. The resulting inward current is much larger.

The protein localises to the membrane. It carries out the reaction K(+)(in) = K(+)(out). Heteromultimer composed of KCNJ3/GIRK1 and KCNJ5/GIRK4 is activated by phosphatidylinositol 4,5 biphosphate (PtdIns(4,5)P2). In terms of biological role, inward rectifier potassium channels are characterized by a greater tendency to allow potassium to flow into the cell rather than out of it. Their voltage dependence is regulated by the concentration of extracellular potassium; as external potassium is raised, the voltage range of the channel opening shifts to more positive voltages. The inward rectification is mainly due to the blockage of outward current by internal magnesium. This receptor plays a crucial role in regulating the heartbeat. Can be blocked by external barium. This potassium channel is controlled by G proteins. The sequence is that of G protein-activated inward rectifier potassium channel 4 (KCNJ5) from Bos taurus (Bovine).